Consider the following 554-residue polypeptide: Chaperonin GroEL (554 aa).

ATP-binding positions include 29–32, K50, 86–90, G414, and D495; these read TLGP and DGTTT.

It belongs to the chaperonin (HSP60) family. In terms of assembly, forms a cylinder of 14 subunits composed of two heptameric rings stacked back-to-back. Interacts with the co-chaperonin GroES.

The protein localises to the cytoplasm. It catalyses the reaction ATP + H2O + a folded polypeptide = ADP + phosphate + an unfolded polypeptide.. Its function is as follows. Together with its co-chaperonin GroES, plays an essential role in assisting protein folding. The GroEL-GroES system forms a nano-cage that allows encapsulation of the non-native substrate proteins and provides a physical environment optimized to promote and accelerate protein folding. This chain is Chaperonin GroEL, found in Pelagibacter ubique (strain HTCC1062).